We begin with the raw amino-acid sequence, 164 residues long: Neurotrophin-3 (164 aa).

Residues 1–3 form the signal peptide; it reads IQS. The propeptide occupies 4 to 120; it reads TNMDQQGSLT…ALNRTSRRKR (117 aa). An N-linked (GlcNAc...) asparagine glycan is attached at N113.

Belongs to the NGF-beta family.

The protein resides in the secreted. In terms of biological role, seems to promote the survival of visceral and proprioceptive sensory neurons. This chain is Neurotrophin-3 (NTF3), found in Sanzinia madagascariensis (Madagascar tree boa).